A 103-amino-acid chain; its full sequence is MQNQRIRIRLKAFDYKLIDQSTAEIVETAKRTGAQVRGPIPLPTRKERFTVLTSPHVNKDARDQYEIRTHKRLIDIVEPTDKTVDALMRLDLAAGVDVQISLG.

It belongs to the universal ribosomal protein uS10 family. In terms of assembly, part of the 30S ribosomal subunit.

Its function is as follows. Involved in the binding of tRNA to the ribosomes. The protein is Small ribosomal subunit protein uS10 of Aliivibrio fischeri (strain ATCC 700601 / ES114) (Vibrio fischeri).